Reading from the N-terminus, the 330-residue chain is GMP reductase (330 aa).

C180 functions as the Thioimidate intermediate in the catalytic mechanism. Position 209–232 (209–232) interacts with NADP(+); the sequence is LIADGGIRHNGDIAKSVRFGASMV.

It belongs to the IMPDH/GMPR family. GuaC type 2 subfamily.

The enzyme catalyses IMP + NH4(+) + NADP(+) = GMP + NADPH + 2 H(+). Its function is as follows. Catalyzes the irreversible NADPH-dependent deamination of GMP to IMP. It functions in the conversion of nucleobase, nucleoside and nucleotide derivatives of G to A nucleotides, and in maintaining the intracellular balance of A and G nucleotides. This chain is GMP reductase, found in Lactobacillus acidophilus (strain ATCC 700396 / NCK56 / N2 / NCFM).